We begin with the raw amino-acid sequence, 157 residues long: Regulatory protein RecX (157 aa).

It belongs to the RecX family.

The protein localises to the cytoplasm. Functionally, modulates RecA activity. This Leptothrix cholodnii (strain ATCC 51168 / LMG 8142 / SP-6) (Leptothrix discophora (strain SP-6)) protein is Regulatory protein RecX.